We begin with the raw amino-acid sequence, 146 residues long: Large ribosomal subunit protein bL9 (146 aa).

The protein belongs to the bacterial ribosomal protein bL9 family.

Its function is as follows. Binds to the 23S rRNA. The protein is Large ribosomal subunit protein bL9 of Deinococcus geothermalis (strain DSM 11300 / CIP 105573 / AG-3a).